The chain runs to 104 residues: Large ribosomal subunit protein bL21 (104 aa).

Residues 78 to 91 (KRRRQNSRRKRGHR) are compositionally biased toward basic residues. Positions 78–104 (KRRRQNSRRKRGHRQDHTVVRITGISA) are disordered.

The protein belongs to the bacterial ribosomal protein bL21 family. As to quaternary structure, part of the 50S ribosomal subunit. Contacts protein L20.

Functionally, this protein binds to 23S rRNA in the presence of protein L20. In Methylobacterium radiotolerans (strain ATCC 27329 / DSM 1819 / JCM 2831 / NBRC 15690 / NCIMB 10815 / 0-1), this protein is Large ribosomal subunit protein bL21.